A 122-amino-acid polypeptide reads, in one-letter code: Large ribosomal subunit protein uL14 (122 aa).

Belongs to the universal ribosomal protein uL14 family. As to quaternary structure, part of the 50S ribosomal subunit. Forms a cluster with proteins L3 and L19. In the 70S ribosome, L14 and L19 interact and together make contacts with the 16S rRNA in bridges B5 and B8.

Binds to 23S rRNA. Forms part of two intersubunit bridges in the 70S ribosome. The sequence is that of Large ribosomal subunit protein uL14 from Rhodospirillum centenum (strain ATCC 51521 / SW).